The following is a 317-amino-acid chain: Cyclin-T1-3 (317 aa).

It belongs to the cyclin family. Cyclin T subfamily. Interacts with CDKC-1 and CDKC-2. As to expression, abundantly expressed in flowers. Expressed in roots, seedlings, rosettes and stems.

The sequence is that of Cyclin-T1-3 (CYCT1-3) from Arabidopsis thaliana (Mouse-ear cress).